A 307-amino-acid polypeptide reads, in one-letter code: Protein phosphatase EYA (307 aa).

The necessary for optimum phosphatase activity stretch occupies residues 1–15 (MNNDTSKKLGTLVSD). Catalysis depends on Asp25, which acts as the Nucleophile. Mg(2+)-binding residues include Asp25, Asp27, and Asp253. Asp27 acts as the Proton donor in catalysis.

It belongs to the HAD-like hydrolase superfamily. EYA family. Requires Mg(2+) as cofactor.

The enzyme catalyses O-phospho-L-tyrosyl-[protein] + H2O = L-tyrosyl-[protein] + phosphate. Inhibited by EDTA. Functionally, possesses phosphatase activity toward para-nitrophenyl phosphate (pNPP) in vitro. Possesses phosphatase activity toward several phosphotyrosine-containing peptides in vitro, with low peptide substrate specificity. The sequence is that of Protein phosphatase EYA from Arabidopsis thaliana (Mouse-ear cress).